The sequence spans 243 residues: Alanyl-tRNA editing protein AlaX-M (243 aa).

Zn(2+) is bound by residues His105, His109, Cys208, and His212.

This sequence belongs to the class-II aminoacyl-tRNA synthetase family. Editing domain AlaX-M subfamily. The cofactor is Zn(2+).

Its subcellular location is the cytoplasm. Functions in trans to edit the amino acid moiety from incorrectly charged Ser-tRNA(Ala) or Gly-tRNA(Ala). Has no activity on incorrectly charged Ser-tRNA(Thr), nor on correctly charged Ala-tRNA(Ala) or Ser-tRNA(Ser). This is Alanyl-tRNA editing protein AlaX-M (alaXM) from Methanosarcina barkeri (strain Fusaro / DSM 804).